Consider the following 79-residue polypeptide: Exodeoxyribonuclease 7 small subunit (79 aa).

It belongs to the XseB family. As to quaternary structure, heterooligomer composed of large and small subunits.

The protein localises to the cytoplasm. The enzyme catalyses Exonucleolytic cleavage in either 5'- to 3'- or 3'- to 5'-direction to yield nucleoside 5'-phosphates.. In terms of biological role, bidirectionally degrades single-stranded DNA into large acid-insoluble oligonucleotides, which are then degraded further into small acid-soluble oligonucleotides. This is Exodeoxyribonuclease 7 small subunit from Lactococcus lactis subsp. lactis (strain IL1403) (Streptococcus lactis).